A 166-amino-acid chain; its full sequence is Spiderine-1b (166 aa).

Residues 1–18 form the signal peptide; that stretch reads MKFALVLLGICAFYLVNA. The propeptide at 19-58 is removed in mature form; the sequence is TGDLETELEASELQELQEALDLIGETSLESLEAEELEEAR. Positions 59-99 are linear cationic cytotoxin domain; that stretch reads KFKWGKLFSAAKKLYKKGKKLSKNKNFKKALKFGKQLAKNL. The Oxytoxin-type inhibitor cystine knot (ICK) domain maps to 113-166; that stretch reads NNKCWAIGTTCSDDCDCCPEHHCHCPAGKWLPGLFRCTCQVTESDKVNKCPPAE. Intrachain disulfides connect Cys116–Cys130, Cys123–Cys135, Cys127–Cys162, Cys129–Cys151, and Cys137–Cys149.

This sequence belongs to the spiderine family. Cationic/spiderine subfamily. In terms of tissue distribution, expressed by the venom gland.

It is found in the secreted. Its function is as follows. Has antimicrobial, insecticidal, cytolytic and cytotoxic activity. This chain is Spiderine-1b, found in Oxyopes takobius (Lynx spider).